The sequence spans 238 residues: Ribonuclease PH (238 aa).

Phosphate contacts are provided by residues Arg86 and 124–126 (GTR).

This sequence belongs to the RNase PH family. Homohexameric ring arranged as a trimer of dimers.

It carries out the reaction tRNA(n+1) + phosphate = tRNA(n) + a ribonucleoside 5'-diphosphate. Its function is as follows. Phosphorolytic 3'-5' exoribonuclease that plays an important role in tRNA 3'-end maturation. Removes nucleotide residues following the 3'-CCA terminus of tRNAs; can also add nucleotides to the ends of RNA molecules by using nucleoside diphosphates as substrates, but this may not be physiologically important. Probably plays a role in initiation of 16S rRNA degradation (leading to ribosome degradation) during starvation. This is Ribonuclease PH from Vibrio vulnificus (strain CMCP6).